The sequence spans 411 residues: ATP-dependent Clp protease ATP-binding subunit ClpX (411 aa).

The ClpX-type ZB domain maps to 1-49 (MSDRDIRCSFCGRTQKEVKKLIAGPGVYICDECVKLAYDIIEEDEEEDV). Residues Cys-8, Cys-11, Cys-30, and Cys-33 each coordinate Zn(2+). An ATP-binding site is contributed by 115–122 (PTGVGKTL).

It belongs to the ClpX chaperone family. In terms of assembly, component of the ClpX-ClpP complex. Forms a hexameric ring that, in the presence of ATP, binds to fourteen ClpP subunits assembled into a disk-like structure with a central cavity, resembling the structure of eukaryotic proteasomes.

ATP-dependent specificity component of the Clp protease. It directs the protease to specific substrates. Can perform chaperone functions in the absence of ClpP. The chain is ATP-dependent Clp protease ATP-binding subunit ClpX from Dictyoglomus thermophilum (strain ATCC 35947 / DSM 3960 / H-6-12).